The sequence spans 177 residues: Transcription termination/antitermination protein NusG (177 aa).

One can recognise a KOW domain in the interval 126–156 (PGETVRVIDGPFADFNGVVEEVNYEKSRIQV).

Belongs to the NusG family.

Participates in transcription elongation, termination and antitermination. This Pseudomonas aeruginosa (strain ATCC 15692 / DSM 22644 / CIP 104116 / JCM 14847 / LMG 12228 / 1C / PRS 101 / PAO1) protein is Transcription termination/antitermination protein NusG.